We begin with the raw amino-acid sequence, 336 residues long: Methionine import ATP-binding protein MetN (336 aa).

The ABC transporter domain maps to 2–254 (IKIKNLKKYY…PNAKMKEFLG (253 aa)). ATP is bound at residue 34 to 41 (GHSGAGKS).

This sequence belongs to the ABC transporter superfamily. Methionine importer (TC 3.A.1.24) family. As to quaternary structure, the complex is composed of two ATP-binding proteins (MetN), two transmembrane proteins (MetI) and a solute-binding protein (MetQ).

It localises to the cell inner membrane. The enzyme catalyses L-methionine(out) + ATP + H2O = L-methionine(in) + ADP + phosphate + H(+). The catalysed reaction is D-methionine(out) + ATP + H2O = D-methionine(in) + ADP + phosphate + H(+). In terms of biological role, part of the ABC transporter complex MetNIQ involved in methionine import. Responsible for energy coupling to the transport system. The sequence is that of Methionine import ATP-binding protein MetN from Campylobacter jejuni subsp. jejuni serotype O:2 (strain ATCC 700819 / NCTC 11168).